The primary structure comprises 121 residues: Cell division protein FtsB (121 aa).

Topologically, residues 1-6 (MRNWRW) are cytoplasmic. The chain crosses the membrane as a helical span at residues 7–24 (LLLVLAVLLAWLQYRFWF). Over 25–121 (GPGNSGEVMM…AASADPVDHP (97 aa)) the chain is Periplasmic. Positions 31 to 66 (EVMMLEAQVAHQTRDNEGLRQRNQALAAEVKDLKDG) form a coiled coil. The tract at residues 98–121 (PPAAQEAAPPAQPPAASADPVDHP) is disordered.

The protein belongs to the FtsB family. Part of a complex composed of FtsB, FtsL and FtsQ.

It is found in the cell inner membrane. In terms of biological role, essential cell division protein. May link together the upstream cell division proteins, which are predominantly cytoplasmic, with the downstream cell division proteins, which are predominantly periplasmic. The sequence is that of Cell division protein FtsB from Xanthomonas campestris pv. campestris (strain 8004).